The primary structure comprises 52 residues: Rubredoxin (52 aa).

Positions 1-51 (MDKYECSICGYIYDEAEGDDGNVAAGTKFADLPADWVCPTCGADKDAFVKM) constitute a Rubredoxin-like domain. Cys-6, Cys-9, Cys-38, and Cys-41 together coordinate Fe cation.

It belongs to the rubredoxin family. Fe(3+) is required as a cofactor.

Functionally, rubredoxin is a small nonheme, iron protein lacking acid-labile sulfide. Its single Fe, chelated to 4 Cys, functions as an electron acceptor and may also stabilize the conformation of the molecule. This is Rubredoxin from Megasphaera elsdenii.